The sequence spans 236 residues: Lectin CPL (236 aa).

Residues Glu8 and Asp10 each contribute to the Mn(2+) site. Ca(2+) is bound by residues Asp10, Tyr12, Asn14, and Asp19. A carbohydrate is bound at residue Asn14. Mn(2+) is bound by residues Asp19 and His24. A carbohydrate-binding positions include 99 to 100 (VY), Asp207, and Arg227.

It belongs to the leguminous lectin family. Homotetramer; dimer of dimers. Post-translationally, concanavalin A-like lectins of the Diocleinae subtribe undergo proteolytic processing referred to as circular permutation. The propeptide is split into an N-terminal and a C-terminal part, the gamma and beta chain, respectively. These are then religated in beta-gamma order to form the mature alpha chain. The beta and gamma chains can often be detected in cell extracts. Residues 1-118 of the mature chain, as displayed here, probably constitute the beta chain in the propeptide, residues 119-236 the gamma chain.

Functionally, D-mannose/D-glucose-binding lectin that also binds derivative alpha-methyl-D-mannppyranoside. Has hemagglutinating activity towards rabbit erythrocytes. In Bionia pedicellata (Camptosema pedicellatum), this protein is Lectin CPL.